A 453-amino-acid polypeptide reads, in one-letter code: Cytochrome b-c1 complex subunit 2, mitochondrial (453 aa).

The N-terminal 14 residues, 1 to 14, are a transit peptide targeting the mitochondrion; that stretch reads MKLLTRAGSFSRFY. An N6-acetyllysine mark is found at Lys66, Lys199, and Lys250.

Belongs to the peptidase M16 family. UQCRC2/QCR2 subfamily. As to quaternary structure, component of the ubiquinol-cytochrome c oxidoreductase (cytochrome b-c1 complex, complex III, CIII), a multisubunit enzyme composed of 11 subunits. The complex is composed of 3 respiratory subunits cytochrome b, cytochrome c1 and Rieske protein UQCRFS1, 2 core protein subunits UQCRC1/QCR1 and UQCRC2/QCR2, and 6 low-molecular weight protein subunits UQCRH/QCR6, UQCRB/QCR7, UQCRQ/QCR8, UQCR10/QCR9, UQCR11/QCR10 and subunit 9, the cleavage product of Rieske protein UQCRFS1. The complex exists as an obligatory dimer and forms supercomplexes (SCs) in the inner mitochondrial membrane with NADH-ubiquinone oxidoreductase (complex I, CI) and cytochrome c oxidase (complex IV, CIV), resulting in different assemblies (supercomplex SCI(1)III(2)IV(1) and megacomplex MCI(2)III(2)IV(2)). Interacts with RAB5IF. Interacts with STMP1.

The protein localises to the mitochondrion inner membrane. In terms of biological role, component of the ubiquinol-cytochrome c oxidoreductase, a multisubunit transmembrane complex that is part of the mitochondrial electron transport chain which drives oxidative phosphorylation. The respiratory chain contains 3 multisubunit complexes succinate dehydrogenase (complex II, CII), ubiquinol-cytochrome c oxidoreductase (cytochrome b-c1 complex, complex III, CIII) and cytochrome c oxidase (complex IV, CIV), that cooperate to transfer electrons derived from NADH and succinate to molecular oxygen, creating an electrochemical gradient over the inner membrane that drives transmembrane transport and the ATP synthase. The cytochrome b-c1 complex catalyzes electron transfer from ubiquinol to cytochrome c, linking this redox reaction to translocation of protons across the mitochondrial inner membrane, with protons being carried across the membrane as hydrogens on the quinol. In the process called Q cycle, 2 protons are consumed from the matrix, 4 protons are released into the intermembrane space and 2 electrons are passed to cytochrome c. The 2 core subunits UQCRC1/QCR1 and UQCRC2/QCR2 are homologous to the 2 mitochondrial-processing peptidase (MPP) subunits beta-MPP and alpha-MPP respectively, and they seem to have preserved their MPP processing properties. May be involved in the in situ processing of UQCRFS1 into the mature Rieske protein and its mitochondrial targeting sequence (MTS)/subunit 9 when incorporated into complex III. In Homo sapiens (Human), this protein is Cytochrome b-c1 complex subunit 2, mitochondrial (UQCRC2).